We begin with the raw amino-acid sequence, 625 residues long: MEILFRENLARIARFKTPHGEIETPTVMPVINPNLNFLDESTLRSYGVQAVITNSYIIKRNQRLNEDALRHGLHSLIKFSGPIMTDSGTFQSHVYGDIEYSNKEIVDFQKAIGSDIITILDVFTEPDESYNSARSKVIETYKRLKEIDFEDKIIAGPVQGSIYPDLRRLSAYLMSDALYLPIGGVVPLLESYRYSDLVKIIFNSKVSSDFSRPVHLFGGGHPMFFAFAVMLGVDLFDSASYIKYAKDNRLLYSEGTRALNDIREFPEWSPIHGKYTPQELLHEESEKRTRMLALHNLKSIFIEINEIKERIYENTLYNYVEEKARSHPALFKAFMSMINYDTSDYSPLSYKSPFFYYDKTSLNHPIIKRIMKFTENYISNSRHTLIISSKYWRPGVKNENVIKNIVECTDFNLLVSWNGIYIPLFLEDSYPVQQLVSSGLNDKKLEEDYLKRLKSINNDIEFYEGEHYDKRLRDYDTEKINTIAMFQFNINERFFDKSNIIKSKSTGHIRNIIEDNNIIATMRNDGYLTLSIKGAYRLLSMKPWPGLRVVVDDESGRFNANGYNVFFKFIKSFDTGIIPGNETLVVSEDDDLYAVGKAAVSGIEMYYYKSGVAVKVHEGVNKKAA.

Asp86 acts as the Nucleophile in catalysis. Residues Asp121 and Gly184 each coordinate substrate. The PUA domain occupies 546-621 (GLRVVVDDES…VAVKVHEGVN (76 aa)).

This sequence belongs to the archaeosine tRNA-ribosyltransferase family. It depends on Zn(2+) as a cofactor.

The catalysed reaction is guanosine(15) in tRNA + 7-cyano-7-deazaguanine = 7-cyano-7-carbaguanosine(15) in tRNA + guanine. Its pathway is tRNA modification; archaeosine-tRNA biosynthesis. In terms of biological role, exchanges the guanine residue with 7-cyano-7-deazaguanine (preQ0) at position 15 in the dihydrouridine loop (D-loop) of archaeal tRNAs. In Picrophilus torridus (strain ATCC 700027 / DSM 9790 / JCM 10055 / NBRC 100828 / KAW 2/3), this protein is tRNA-guanine(15) transglycosylase.